A 440-amino-acid chain; its full sequence is Xaa-Pro dipeptidase (440 aa).

Mn(2+) is bound by residues Asp-244, Asp-255, His-335, Glu-380, and Glu-419.

It belongs to the peptidase M24B family. Bacterial-type prolidase subfamily. Requires Mn(2+) as cofactor.

The catalysed reaction is Xaa-L-Pro dipeptide + H2O = an L-alpha-amino acid + L-proline. Its function is as follows. Splits dipeptides with a prolyl residue in the C-terminal position. The chain is Xaa-Pro dipeptidase from Shewanella denitrificans (strain OS217 / ATCC BAA-1090 / DSM 15013).